The following is a 57-amino-acid chain: Sperm histone (57 aa).

The disordered stretch occupies residues 1 to 57 (MARYRRTRTRSRSRRRRRSRRRRSSRRRRYGRSRRSYRSVGRRRRRYGRRRRRRRRY). T9 carries the post-translational modification Phosphothreonine.

This sequence belongs to the protamine P1 family. In terms of tissue distribution, testis.

It localises to the nucleus. The protein resides in the chromosome. In terms of biological role, protamines substitute for histones in the chromatin of sperm during the haploid phase of spermatogenesis. They compact sperm DNA into a highly condensed, stable and inactive complex. This Coturnix japonica (Japanese quail) protein is Sperm histone.